Here is a 499-residue protein sequence, read N- to C-terminus: Putative ribose/galactose/methyl galactoside import ATP-binding protein 3 (499 aa).

2 ABC transporter domains span residues 8-243 and 253-497; these read LRMR…VGRE and SKIG…TGEE. Residue 40–47 coordinates ATP; the sequence is GENGAGKS.

It belongs to the ABC transporter superfamily. Carbohydrate importer 2 (CUT2) (TC 3.A.1.2) family.

Its subcellular location is the cell inner membrane. It catalyses the reaction D-ribose(out) + ATP + H2O = D-ribose(in) + ADP + phosphate + H(+). The catalysed reaction is D-galactose(out) + ATP + H2O = D-galactose(in) + ADP + phosphate + H(+). Functionally, part of an ABC transporter complex involved in carbohydrate import. Could be involved in ribose, galactose and/or methyl galactoside import. Responsible for energy coupling to the transport system. In Agrobacterium fabrum (strain C58 / ATCC 33970) (Agrobacterium tumefaciens (strain C58)), this protein is Putative ribose/galactose/methyl galactoside import ATP-binding protein 3.